Here is a 547-residue protein sequence, read N- to C-terminus: Pyochelin synthase PchD (547 aa).

The protein belongs to the ATP-dependent AMP-binding enzyme family.

The catalysed reaction is salicylate + holo-[ACP] + ATP = salicyl-[ACP] + AMP + diphosphate. It participates in siderophore biosynthesis. The protein operates within antifungal biosynthesis. In terms of biological role, involved in the biosynthesis of the siderophore pyochelin. Specifically adenylates salicylate and loads it onto the holo form of PchE via a thioester linkage to the phosphopanthetheine moiety. Is also involved in the synthesis of the antifungal antibiotic dihydroaeruginoic acid (Dha or hydroxyphenyl-thiazolinyl-carboxylate), a precursor of pyochelin. This chain is Pyochelin synthase PchD, found in Pseudomonas aeruginosa (strain UCBPP-PA14).